The following is a 412-amino-acid chain: Histidine--tRNA ligase (412 aa).

The protein belongs to the class-II aminoacyl-tRNA synthetase family. In terms of assembly, homodimer.

The protein localises to the cytoplasm. It catalyses the reaction tRNA(His) + L-histidine + ATP = L-histidyl-tRNA(His) + AMP + diphosphate + H(+). The chain is Histidine--tRNA ligase from Maridesulfovibrio salexigens (strain ATCC 14822 / DSM 2638 / NCIMB 8403 / VKM B-1763) (Desulfovibrio salexigens).